We begin with the raw amino-acid sequence, 315 residues long: Homoserine kinase (315 aa).

ATP is bound at residue 97 to 107; that stretch reads PPARGLGSSAT.

Belongs to the GHMP kinase family. Homoserine kinase subfamily.

The protein resides in the cytoplasm. It catalyses the reaction L-homoserine + ATP = O-phospho-L-homoserine + ADP + H(+). It functions in the pathway amino-acid biosynthesis; L-threonine biosynthesis; L-threonine from L-aspartate: step 4/5. Catalyzes the ATP-dependent phosphorylation of L-homoserine to L-homoserine phosphate. The polypeptide is Homoserine kinase (Prochlorococcus marinus (strain SARG / CCMP1375 / SS120)).